The primary structure comprises 4650 residues: Nonribosomal peptide synthetase lenA (4650 aa).

The segment at 227 to 628 (GSILDTIRAK…DGSVIHVGRK (402 aa)) is adenylation 1. The Carrier 1 domain maps to 773–849 (PPETVLEKAL…KLAQYLRNTE (77 aa)). Position 810 is an O-(pantetheine 4'-phosphoryl)serine (S810). Residues 890–1212 (EDCYPCTALQ…CDFQSQLIFQ (323 aa)) are condensation 1. Positions 1288 to 1622 (ELELNAQKEP…RKIRPGYLGR (335 aa)) are adenylation 2. The 78-residue stretch at 1745 to 1822 (PPVSAAEKKW…EIAALSETRD (78 aa)) folds into the Carrier 2 domain. S1782 bears the O-(pantetheine 4'-phosphoryl)serine mark. The condensation 2 stretch occupies residues 1850 to 2110 (ATNLIAATVH…GEKTRPGGGA (261 aa)). The segment at 2183-2511 (RCVHDLVHDA…RTGDLIKLRG (329 aa)) is adenylation 3. Positions 2630-2708 (APQNRLQHDI…EADVGLDHAS (79 aa)) constitute a Carrier 3 domain. Residue S2667 is modified to O-(pantetheine 4'-phosphoryl)serine. The interval 2722 to 2998 (ESMARALAVI…KDARRRSPAN (277 aa)) is epimerase. Positions 3128-3565 (VQDVYPCTPI…VDDSQRQQIL (438 aa)) are condensation 3. The interval 3578-3980 (CVHHIIHQRC…FVGRKDNQIK (403 aa)) is adenylation 4. The region spanning 4114-4190 (TPSTPLEAQL…QLAAVLEEGA (77 aa)) is the Carrier 4 domain. S4151 carries the O-(pantetheine 4'-phosphoryl)serine modification. A condensation 4 region spans residues 4249 to 4648 (HMVLTFSQPV…TTTPEKLVAE (400 aa)).

It belongs to the NRP synthetase family. Pantetheine 4'-phosphate is required as a cofactor.

Its pathway is alkaloid biosynthesis. Nonribosomal peptide synthetase; part of the gene cluster that mediates the biosynthesis of the ergot alkaloids lentopeptins A and B. Within the pathway, lenA catalyzes the biosynthesis of the Ala-Val-Ala peptide chain, including a cinnamic acid moiety as the starting unit. The release of the peptide from the enzyme is accomplished via a cyclization reaction catalyzed by the terminal condensation-like (Ct) domain of lenA to form the N-acyldiketopiperazine intermediate. The reaction appears to proceed through a nucleophilic attack on the carbonyl carbon by a lone electron pair of the valine amide nitrogen. The phenylalanine ammonia-lyase lenB provides the starter unit for the synthesis of the N-acyldiketopiperazine intermediate by the NRPS lenA, while the cytochrome P450 monooxygenase lenC is involved in the post-NRPS oxidative modification steps to form lentopeptins A and B. The sequence is that of Nonribosomal peptide synthetase lenA from Aspergillus lentulus.